A 110-amino-acid chain; its full sequence is Host transcription reprogramming factor 2 (110 aa).

The signal sequence occupies residues 1–18; sequence MHLKASSILALLVIGANA. The C2H2-type zinc-finger motif lies at 68-96; the sequence is IMCGYCGKRFWNKPDLEKHIKLKPSKGGH. Residues 88–110 form a disordered region; it reads KLKPSKGGHKGQPYKEHSWNRPT. Basic and acidic residues predominate over residues 100 to 110; sequence PYKEHSWNRPT.

The protein localises to the secreted. It is found in the host nucleus. Secreted effector that translocates into the nuclei of host cells to reprogram the expression of immunity-associated genes by binding to effector binding elements (EBEs) in rice. Binds the 5'-CCACCTCC-3' EBE of promoters from targeted rice genes and probably recruits a yet to be determined host repressor. Causes ambivalent immunity with increased susceptibility to the hemibiotrophic pathogens Magnaporthe oryzae and Xanthomonas oryzae pv. oryzae, but enhances resistance to Cochliobolus miyabeanus, a necrotrophic pathogen. This chain is Host transcription reprogramming factor 2, found in Pyricularia oryzae (strain 70-15 / ATCC MYA-4617 / FGSC 8958) (Rice blast fungus).